A 241-amino-acid polypeptide reads, in one-letter code: Probable WRKY transcription factor 63 (241 aa).

The tract at residues 56-79 (NSPNRQPHHESSSRDMAGLVPQRS) is disordered. The segment at residues 97–165 (SPNPRLDDGF…YLGQHTCKAF (69 aa)) is a DNA-binding region (WRKY).

This sequence belongs to the WRKY group III family.

It is found in the nucleus. Functionally, transcription factor. Interacts specifically with the W box (5'-(T)TGAC[CT]-3'), a frequently occurring elicitor-responsive cis-acting element. This Arabidopsis thaliana (Mouse-ear cress) protein is Probable WRKY transcription factor 63 (WRKY63).